Here is a 448-residue protein sequence, read N- to C-terminus: Phosphoglucosamine mutase (448 aa).

Serine 100 serves as the catalytic Phosphoserine intermediate. Mg(2+)-binding residues include serine 100, aspartate 240, aspartate 242, and aspartate 244. Position 100 is a phosphoserine (serine 100).

This sequence belongs to the phosphohexose mutase family. Requires Mg(2+) as cofactor. Post-translationally, activated by phosphorylation.

It carries out the reaction alpha-D-glucosamine 1-phosphate = D-glucosamine 6-phosphate. In terms of biological role, catalyzes the conversion of glucosamine-6-phosphate to glucosamine-1-phosphate. This chain is Phosphoglucosamine mutase, found in Clostridium beijerinckii (strain ATCC 51743 / NCIMB 8052) (Clostridium acetobutylicum).